A 428-amino-acid chain; its full sequence is Glutamate-1-semialdehyde 2,1-aminomutase (428 aa).

N6-(pyridoxal phosphate)lysine is present on K265.

It belongs to the class-III pyridoxal-phosphate-dependent aminotransferase family. HemL subfamily. Homodimer. Pyridoxal 5'-phosphate serves as cofactor.

The protein localises to the cytoplasm. The enzyme catalyses (S)-4-amino-5-oxopentanoate = 5-aminolevulinate. It participates in porphyrin-containing compound metabolism; protoporphyrin-IX biosynthesis; 5-aminolevulinate from L-glutamyl-tRNA(Glu): step 2/2. The chain is Glutamate-1-semialdehyde 2,1-aminomutase from Shewanella loihica (strain ATCC BAA-1088 / PV-4).